The sequence spans 343 residues: Nod factor export ATP-binding protein I (343 aa).

Polar residues predominate over residues 1 to 14 (MQLLTRANVSSSPS). The tract at residues 1-38 (MQLLTRANVSSSPSRRPESNALKQKCHGHSNADNSLSR) is disordered. One can recognise an ABC transporter domain in the interval 45-275 (IELTNVSKSY…QIGCDVIEIY (231 aa)). 77–84 (GPNGAGKS) is a binding site for ATP.

It belongs to the ABC transporter superfamily. Lipooligosaccharide exporter (TC 3.A.1.102) family. As to quaternary structure, the complex is composed of two ATP-binding proteins (NodI) and two transmembrane proteins (NodJ).

It is found in the cell inner membrane. Part of the ABC transporter complex NodIJ involved in the export of the nodulation factors (Nod factors), the bacterial signal molecules that induce symbiosis and subsequent nodulation induction. Nod factors are LCO (lipo-chitin oligosaccharide), a modified beta-1,4-linked N-acetylglucosamine oligosaccharide. This subunit is responsible for energy coupling to the transport system. This Sinorhizobium fredii (strain NBRC 101917 / NGR234) protein is Nod factor export ATP-binding protein I.